Here is a 110-residue protein sequence, read N- to C-terminus: Large ribosomal subunit protein uL22 (110 aa).

This sequence belongs to the universal ribosomal protein uL22 family. In terms of assembly, part of the 50S ribosomal subunit.

Its function is as follows. This protein binds specifically to 23S rRNA; its binding is stimulated by other ribosomal proteins, e.g. L4, L17, and L20. It is important during the early stages of 50S assembly. It makes multiple contacts with different domains of the 23S rRNA in the assembled 50S subunit and ribosome. Functionally, the globular domain of the protein is located near the polypeptide exit tunnel on the outside of the subunit, while an extended beta-hairpin is found that lines the wall of the exit tunnel in the center of the 70S ribosome. This chain is Large ribosomal subunit protein uL22, found in Pseudomonas aeruginosa (strain LESB58).